A 109-amino-acid chain; its full sequence is Homeobox protein E60 (109 aa).

The interval 1–31 (PRTRRVKRSDGRGNGGTPEEKRPRTAFSGEQ) is disordered. Residues 20-79 (EKRPRTAFSGEQLARLKREFAENRYLTERRRQQLSRDLGLNEAQIKIWFQNKRAKIKKAS) constitute a DNA-binding region (homeobox).

It belongs to the engrailed homeobox family.

The protein resides in the nucleus. This Apis mellifera (Honeybee) protein is Homeobox protein E60.